We begin with the raw amino-acid sequence, 285 residues long: Trypsin Tyr p 3.0101 (285 aa).

A signal peptide spans 1 to 16; sequence MKILLFLCFLVSVAFA. Residues 17-33 constitute a propeptide that is removed on maturation; the sequence is KPPTIQLKSNTKSQNGF. In terms of domain architecture, Peptidase S1 spans 34–262; sequence IVGGTEAVDG…YLDWIELSAK (229 aa). Cys-58 and Cys-74 are joined by a disulfide. Active-site charge relay system residues include His-73 and Asp-120. Cystine bridges form between Cys-186–Cys-202 and Cys-214–Cys-238. The active-site Charge relay system is the Ser-218.

This sequence belongs to the peptidase S1 family.

It is found in the secreted. It catalyses the reaction Preferential cleavage: Arg-|-Xaa, Lys-|-Xaa.. Its activity is regulated as follows. Inhibited by the serine protease inhibitor phenylmethylsulfonyl, and trypsin inhibitors soybean trypsin inhibitor and tosyllysine chloromethyl ketone. Not inhibited by dithiothreitol, a cysteine protease inhibitor. Its function is as follows. Digests TAMe (p-toluene arginine methyl ester), but not ethyl N-benzoyl-L-tyrosinate (BTEE). This chain is Trypsin Tyr p 3.0101, found in Tyrophagus putrescentiae (Mold mite).